Reading from the N-terminus, the 407-residue chain is Elongation factor Tu (407 aa).

The tr-type G domain maps to Lys-10 to Glu-217. Residues Gly-19–Thr-26 are G1. GTP is bound at residue Gly-19–Thr-26. Thr-26 contributes to the Mg(2+) binding site. A G2 region spans residues Gly-60–Ser-64. Residues Asp-81–Gly-84 form a G3 region. Residues Asp-81–His-85 and Asn-136–Asp-139 contribute to the GTP site. Residues Asn-136–Asp-139 are G4. Residues Ser-184–Leu-186 form a G5 region.

The protein belongs to the TRAFAC class translation factor GTPase superfamily. Classic translation factor GTPase family. EF-Tu/EF-1A subfamily. Monomer.

It is found in the cytoplasm. The enzyme catalyses GTP + H2O = GDP + phosphate + H(+). Functionally, GTP hydrolase that promotes the GTP-dependent binding of aminoacyl-tRNA to the A-site of ribosomes during protein biosynthesis. The protein is Elongation factor Tu of Marinomonas sp. (strain MWYL1).